A 108-amino-acid polypeptide reads, in one-letter code: uncharacterized protein (108 aa).

The chain crosses the membrane as a helical span at residues 64–84; it reads LFIIYYYYYLLICLSPHFFPI.

The protein resides in the membrane. This is an uncharacterized protein from Schizosaccharomyces pombe (strain 972 / ATCC 24843) (Fission yeast).